Consider the following 309-residue polypeptide: Ribosomal RNA small subunit methyltransferase H (309 aa).

Residues 39–41 (GGH), D59, F83, D100, and Q107 each bind S-adenosyl-L-methionine.

Belongs to the methyltransferase superfamily. RsmH family.

It localises to the cytoplasm. It carries out the reaction cytidine(1402) in 16S rRNA + S-adenosyl-L-methionine = N(4)-methylcytidine(1402) in 16S rRNA + S-adenosyl-L-homocysteine + H(+). In terms of biological role, specifically methylates the N4 position of cytidine in position 1402 (C1402) of 16S rRNA. The sequence is that of Ribosomal RNA small subunit methyltransferase H from Delftia acidovorans (strain DSM 14801 / SPH-1).